The sequence spans 443 residues: Chromosomal replication initiator protein DnaA (443 aa).

Residues 1–67 are domain I, interacts with DnaA modulators; the sequence is MDAWSRSLER…RELLAHFAGF (67 aa). The tract at residues 67–105 is domain II; sequence FSDVFLEIGSRPRPVEAQNAPVSTPSAHVSSEPQVPFAG. The domain III, AAA+ region stretch occupies residues 106 to 323; the sequence is NLDNHYTFAN…GALNTLTARA (218 aa). The ATP site is built by glycine 151, glycine 153, lysine 154, and threonine 155. The tract at residues 324–443 is domain IV, binds dsDNA; it reads NFTGRAITTE…WDKLIRKLSE (120 aa).

This sequence belongs to the DnaA family. Oligomerizes as a right-handed, spiral filament on DNA at oriC.

It is found in the cytoplasm. Its function is as follows. Plays an essential role in the initiation and regulation of chromosomal replication. ATP-DnaA binds to the origin of replication (oriC) to initiate formation of the DNA replication initiation complex once per cell cycle. Binds the DnaA box (a 9 base pair repeat at the origin) and separates the double-stranded (ds)DNA. Forms a right-handed helical filament on oriC DNA; dsDNA binds to the exterior of the filament while single-stranded (ss)DNA is stabiized in the filament's interior. The ATP-DnaA-oriC complex binds and stabilizes one strand of the AT-rich DNA unwinding element (DUE), permitting loading of DNA polymerase. After initiation quickly degrades to an ADP-DnaA complex that is not apt for DNA replication. Binds acidic phospholipids. The polypeptide is Chromosomal replication initiator protein DnaA (Stenotrophomonas maltophilia (strain K279a)).